A 316-amino-acid polypeptide reads, in one-letter code: Ribose-phosphate pyrophosphokinase (316 aa).

ATP contacts are provided by residues 41–43 and 100–101; these read DGE and RQ. Mg(2+)-binding residues include His134 and Asp175. The active site involves Lys198. Residues Arg200, Asp224, and 228-232 contribute to the D-ribose 5-phosphate site; that span reads DTARS.

It belongs to the ribose-phosphate pyrophosphokinase family. Class I subfamily. As to quaternary structure, homohexamer. Requires Mg(2+) as cofactor.

The protein resides in the cytoplasm. The enzyme catalyses D-ribose 5-phosphate + ATP = 5-phospho-alpha-D-ribose 1-diphosphate + AMP + H(+). The protein operates within metabolic intermediate biosynthesis; 5-phospho-alpha-D-ribose 1-diphosphate biosynthesis; 5-phospho-alpha-D-ribose 1-diphosphate from D-ribose 5-phosphate (route I): step 1/1. Functionally, involved in the biosynthesis of the central metabolite phospho-alpha-D-ribosyl-1-pyrophosphate (PRPP) via the transfer of pyrophosphoryl group from ATP to 1-hydroxyl of ribose-5-phosphate (Rib-5-P). This is Ribose-phosphate pyrophosphokinase from Thermosipho africanus (strain TCF52B).